A 522-amino-acid polypeptide reads, in one-letter code: Target of rapamycin complex 2 subunit MAPKAP1 (522 aa).

N-acetylalanine is present on A2. The interval 2-184 (AFLDNPTIIL…KKIDVYLPLH (183 aa)) is interaction with MAP3K2. Residues 2 to 267 (AFLDNPTIIL…GFSTLALVEK (266 aa)) are interaction with NBN. T86 bears the Phosphothreonine mark. Phosphoserine is present on residues S128, S186, S315, and S356. One can recognise a CRIM domain in the interval 139-267 (QSILSVRLEQ…GFSTLALVEK (129 aa)). Residues 279–353 (LFVRINAAHG…QSAWEFCLVR (75 aa)) form an SIN1-type RBD region. An SIN1-type PH domain is found at 382-487 (HYKSFKVSMI…IVLKVNYILE (106 aa)). R393 is an a 1,2-diacyl-sn-glycero-3-phospho-(1D-myo-inositol-3,4,5-trisphosphate) binding site. T398 is modified (phosphothreonine). 2 residues coordinate a 1,2-diacyl-sn-glycero-3-phospho-(1D-myo-inositol-3,4,5-trisphosphate): K428 and K464. Residues 468 to 522 (FESDAATVNEIVLKVNYILESRASTARADYFAQKQRKLNRRTSFSFQKEKKSGQQ) are interaction with ATF2. Position 510 is a phosphoserine (S510).

The protein belongs to the SIN1 family. Component of the mechanistic target of rapamycin complex 2 (mTORC2), consisting in two heterotretramers composed of MTOR, MLST8, RICTOR and MAPKAP1/SIN1. The mTORC2 core complex associates with PRR5/PROTOR1 and/or PRR5L/PROTOR2. Contrary to mTORC1, mTORC2 does not bind to and is not sensitive to FKBP12-rapamycin. Interacts with MAP3K2. Interacts with ATF2. Interacts with MAPK8. Interacts with GTP-bound HRAS and KRAS; inhibiting their activity. Interacts with IFNAR2. In terms of assembly, interacts with CCDC28B. As to quaternary structure, interacts with NBN. In terms of processing, phosphorylation at Ser-128 by PKC promotes relocalization to the perinuclear region, where the mTORC2 complex specifically mediates phosphorylation of SGK1. Phosphorylated at Thr-86 by AKT1 or RPS6KB1 in the presence of growth factors; the effect of this phosphorylation is however unclear. According to two studies, phosphorylation at Thr-86 by AKT1 is part of a positive feedback loop that increases mTORC2 activation. According to another study, phosphorylation at Thr-86 and Thr-398 by RPS6KB1 promotes dissociation from the mTORC2 complex, leading to inhibit mTORC2 signaling. In terms of tissue distribution, ubiquitously expressed, with highest levels in heart and skeletal muscle.

It is found in the cell membrane. The protein resides in the endoplasmic reticulum membrane. Its subcellular location is the early endosome membrane. It localises to the late endosome membrane. The protein localises to the lysosome membrane. It is found in the golgi apparatus membrane. The protein resides in the mitochondrion outer membrane. Its subcellular location is the cytoplasm. It localises to the perinuclear region. The protein localises to the nucleus. It is found in the cytosol. Its activity is regulated as follows. Phosphatidylinositol 3,4,5-trisphosphate (PI(3,4,5)P3) promotes MTOR activation by relieving MAPKAP1/SIN1-mediated inhibition of MTOR that takes place in absence of PI(3,4,5)P3. Its function is as follows. Component of the mechanistic target of rapamycin complex 2 (mTORC2), which transduces signals from growth factors to pathways involved in proliferation, cytoskeletal organization, lipogenesis and anabolic output. In response to growth factors, mTORC2 phosphorylates and activates AGC protein kinase family members, including AKT (AKT1, AKT2 and AKT3), PKC (PRKCA, PRKCB and PRKCE) and SGK1. In contrast to mTORC1, mTORC2 is nutrient-insensitive. Within the mTORC2 complex, MAPKAP1/SIN1 acts as a substrate adapter which recognizes and binds AGC protein kinase family members for phosphorylation by MTOR. mTORC2 plays a critical role in AKT1 activation by mediating phosphorylation of different sites depending on the context, such as 'Thr-450', 'Ser-473', 'Ser-477' or 'Thr-479', facilitating the phosphorylation of the activation loop of AKT1 on 'Thr-308' by PDPK1/PDK1 which is a prerequisite for full activation. mTORC2 catalyzes the phosphorylation of SGK1 at 'Ser-422' and of PRKCA on 'Ser-657'. The mTORC2 complex also phosphorylates various proteins involved in insulin signaling, such as FBXW8 and IGF2BP1. mTORC2 acts upstream of Rho GTPases to regulate the actin cytoskeleton, probably by activating one or more Rho-type guanine nucleotide exchange factors. mTORC2 promotes the serum-induced formation of stress-fibers or F-actin. MAPKAP1 inhibits MAP3K2 by preventing its dimerization and autophosphorylation. Inhibits HRAS and KRAS independently of mTORC2 complex. Enhances osmotic stress-induced phosphorylation of ATF2 and ATF2-mediated transcription. Involved in ciliogenesis, regulates cilia length through its interaction with CCDC28B independently of mTORC2 complex. In contrast to isoform 1, isoform 2 and isoform 6, isoform 4 is not a component of the a mTORC2 complex. The protein is Target of rapamycin complex 2 subunit MAPKAP1 of Homo sapiens (Human).